The following is an 826-amino-acid chain: Copper-transporting ATPase 1 (826 aa).

HMA domains are found at residues 15–80 (APTD…YEPK) and 82–147 (IIQE…YDVR). The Cu cation site is built by C26, C29, C93, and C96. 6 consecutive transmembrane segments (helical) span residues 172 to 192 (LVIL…GSHF), 209 to 229 (NLYI…LRFF), 246 to 266 (LVVL…FASG), 270 to 290 (SGTA…ILLG), 429 to 449 (AWFV…WYVF), and 457 to 477 (FALV…MGLA). D514 serves as the catalytic 4-aspartylphosphate intermediate. Residues D713 and D717 each contribute to the Mg(2+) site. 2 consecutive transmembrane segments (helical) span residues 772-792 (FWAF…LYPL) and 795-815 (TLLS…FVLG).

It belongs to the cation transport ATPase (P-type) (TC 3.A.3) family. Type IB subfamily.

Its subcellular location is the cell membrane. The catalysed reaction is Cu(2+)(in) + ATP + H2O = Cu(2+)(out) + ADP + phosphate + H(+). Its function is as follows. Involved in copper transport. The protein is Copper-transporting ATPase 1 (actP1) of Rhizobium meliloti (strain 1021) (Ensifer meliloti).